Consider the following 338-residue polypeptide: MTCTIIVGGQWGDEGKGKVISYLCKKDNPSIIARGGVGPNAGHTVEVDGEKYGIRMVPTGFPNVNAKLAVGAGVLTDPEVLVREIEKLQKFNVGERIIIDYRCGVIESKHRDLDKSNEHLSKEIGSTGTGCGPANVDRAMRTLKLAKDVSELSKYLGDVSEAVNNAIESGDNVIIEGTQGSLLSLYYGSYPYVTSKDTNAASFAADVGLGPTKIDEVVAVFKSYPTRVGEGPFPTEMSLEEAEKLGVVEYGTVTGRRRRVGYFDFELAKKVCKLNGATQIAITCLDKYDPLCYGIIDYNELSEKGKAFIKEVEEKVGVRVTIISTGPELSQTIDIRNK.

GTP-binding positions include 12 to 18 (GDEGKGK) and 42 to 44 (GHT). Asp13 functions as the Proton acceptor in the catalytic mechanism. Mg(2+) contacts are provided by Asp13 and Gly42. IMP contacts are provided by residues 13–16 (DEGK), 40–43 (NAGH), Thr127, Arg141, Gln179, Thr194, and Arg256. His43 acts as the Proton donor in catalysis. Position 252–258 (252–258 (TVTGRRR)) interacts with substrate. GTP contacts are provided by residues Arg258, 284-286 (CLD), and 324-326 (STG).

It belongs to the adenylosuccinate synthetase family. As to quaternary structure, homodimer. Requires Mg(2+) as cofactor.

It localises to the cytoplasm. The catalysed reaction is IMP + L-aspartate + GTP = N(6)-(1,2-dicarboxyethyl)-AMP + GDP + phosphate + 2 H(+). The protein operates within purine metabolism; AMP biosynthesis via de novo pathway; AMP from IMP: step 1/2. In terms of biological role, plays an important role in the de novo pathway of purine nucleotide biosynthesis. Catalyzes the first committed step in the biosynthesis of AMP from IMP. The chain is Adenylosuccinate synthetase from Methanococcus vannielii (strain ATCC 35089 / DSM 1224 / JCM 13029 / OCM 148 / SB).